The primary structure comprises 152 residues: Large ribosomal subunit protein eL14 (152 aa).

It belongs to the eukaryotic ribosomal protein eL14 family.

The sequence is that of Large ribosomal subunit protein eL14 (RPL14) from Lumbricus rubellus (Humus earthworm).